We begin with the raw amino-acid sequence, 473 residues long: ATP synthase subunit beta, chloroplastic (473 aa).

An ATP-binding site is contributed by 172 to 179 (GGAGVGKT).

The protein belongs to the ATPase alpha/beta chains family. F-type ATPases have 2 components, CF(1) - the catalytic core - and CF(0) - the membrane proton channel. CF(1) has five subunits: alpha(3), beta(3), gamma(1), delta(1), epsilon(1). CF(0) has four main subunits: a(1), b(1), b'(1) and c(9-12).

The protein resides in the plastid. It localises to the chloroplast thylakoid membrane. It catalyses the reaction ATP + H2O + 4 H(+)(in) = ADP + phosphate + 5 H(+)(out). In terms of biological role, produces ATP from ADP in the presence of a proton gradient across the membrane. The catalytic sites are hosted primarily by the beta subunits. This chain is ATP synthase subunit beta, chloroplastic, found in Equisetum arvense (Field horsetail).